Here is a 315-residue protein sequence, read N- to C-terminus: Endolytic peptidoglycan transglycosylase RlpA (315 aa).

A signal peptide spans 1-19 (MGLALEKVCFLGVIFLISA). C20 is lipidated: N-palmitoyl cysteine. Residue C20 is the site of S-diacylglycerol cysteine attachment. Over residues 68–79 (SDSQDSNTKDQP) the composition is skewed to basic and acidic residues. Positions 68–92 (SDSQDSNTKDQPLDNGMRDSSSIQR) are disordered. An SPOR domain is found at 242–315 (SVSGGKFSLQ…YNQNAVLTRE (74 aa)).

This sequence belongs to the RlpA family.

The protein resides in the cell membrane. In terms of biological role, lytic transglycosylase with a strong preference for naked glycan strands that lack stem peptides. This is Endolytic peptidoglycan transglycosylase RlpA from Helicobacter pylori (strain ATCC 700392 / 26695) (Campylobacter pylori).